Reading from the N-terminus, the 186-residue chain is Translation initiation factor IF-3 (186 aa).

The interval 1–20 (MINRSAGKDRDRSRSGDKEL) is disordered.

It belongs to the IF-3 family. As to quaternary structure, monomer.

It localises to the cytoplasm. IF-3 binds to the 30S ribosomal subunit and shifts the equilibrium between 70S ribosomes and their 50S and 30S subunits in favor of the free subunits, thus enhancing the availability of 30S subunits on which protein synthesis initiation begins. The polypeptide is Translation initiation factor IF-3 (Borrelia hermsii (strain HS1 / DAH)).